A 112-amino-acid polypeptide reads, in one-letter code: Diuretic hormone class 2 (112 aa).

An N-terminal signal peptide occupies residues 1 to 24 (MVRATCLLASCVLFALLLIVPASA). Positions 25–71 (YPRYPSNYFREEGQYEPEEIMDMLNRLGNLIQMERKMENYKEDITSE) are excised as a propeptide. Pro104 is subject to Proline amide. Residues 108 to 112 (RRDAH) constitute a propeptide that is removed on maturation.

Expressed in corpora cardiaca (CC), corpora allata (CA), antennal lobe (AL) and gnathal ganglion (GNG) (at protein level). Expression in CC, CA and AL detected in most animals, expression in GNG in few animals (at protein level).

It localises to the secreted. Its function is as follows. Regulation of fluid secretion. Stimulates Malpighian tubule fluid secretion. This chain is Diuretic hormone class 2, found in Agrotis ipsilon (Black cutworm moth).